The following is a 661-amino-acid chain: UvrABC system protein B (661 aa).

The Helicase ATP-binding domain occupies 28 to 414 (DGVNEGKRHQ…HTDEMVEQII (387 aa)). 41–48 (GATGTGKT) lines the ATP pocket. The Beta-hairpin motif lies at 94–117 (YYDYYQPEAYVPSTDTFIEKDASI). Residues 432 to 598 (QIDDLLSEIQ…TINKKIHDVI (167 aa)) enclose the Helicase C-terminal domain. Residues 603–624 (ESDETNQQQQTELPKKMTKKER) are disordered. Residues 625 to 660 (QKTIENIEKEMKKAAKDLDFEKATELRDMLFELKAE) enclose the UVR domain.

This sequence belongs to the UvrB family. As to quaternary structure, forms a heterotetramer with UvrA during the search for lesions. Interacts with UvrC in an incision complex.

It is found in the cytoplasm. In terms of biological role, the UvrABC repair system catalyzes the recognition and processing of DNA lesions. A damage recognition complex composed of 2 UvrA and 2 UvrB subunits scans DNA for abnormalities. Upon binding of the UvrA(2)B(2) complex to a putative damaged site, the DNA wraps around one UvrB monomer. DNA wrap is dependent on ATP binding by UvrB and probably causes local melting of the DNA helix, facilitating insertion of UvrB beta-hairpin between the DNA strands. Then UvrB probes one DNA strand for the presence of a lesion. If a lesion is found the UvrA subunits dissociate and the UvrB-DNA preincision complex is formed. This complex is subsequently bound by UvrC and the second UvrB is released. If no lesion is found, the DNA wraps around the other UvrB subunit that will check the other stand for damage. The protein is UvrABC system protein B of Staphylococcus epidermidis (strain ATCC 35984 / DSM 28319 / BCRC 17069 / CCUG 31568 / BM 3577 / RP62A).